Consider the following 440-residue polypeptide: Chitinase-like protein Idgf5 (440 aa).

The signal sequence occupies residues 1-27 (MRNKMIYFNFHLFVIIFANLQIFQVQA). The region spanning 28–439 (ANIFCYYDTQ…KSIHNAFKKF (412 aa)) is the GH18 domain. Cys32 and Cys56 form a disulfide bridge. Asn126, Asn283, and Asn403 each carry an N-linked (GlcNAc...) asparagine glycan. Residues Cys340 and Cys421 are joined by a disulfide bond.

It belongs to the glycosyl hydrolase 18 family. IDGF subfamily. In terms of processing, glycosylated.

It localises to the secreted. Functionally, cooperates with insulin-like peptides to stimulate the proliferation, polarization and motility of imaginal disk cells. May act by stabilizing the binding of insulin-like peptides to its receptor through a simultaneous interaction with both molecules to form a multiprotein signaling complex. The polypeptide is Chitinase-like protein Idgf5 (Idgf5) (Glossina morsitans morsitans (Savannah tsetse fly)).